An 84-amino-acid chain; its full sequence is Small ribosomal subunit protein uS17 (84 aa).

This sequence belongs to the universal ribosomal protein uS17 family. In terms of assembly, part of the 30S ribosomal subunit.

Its function is as follows. One of the primary rRNA binding proteins, it binds specifically to the 5'-end of 16S ribosomal RNA. In Clostridium beijerinckii (strain ATCC 51743 / NCIMB 8052) (Clostridium acetobutylicum), this protein is Small ribosomal subunit protein uS17.